We begin with the raw amino-acid sequence, 243 residues long: MTYCLRIADIPTNERPRERLMTHGPKVLATAELIAILLGTGQGPGKLSAVGLGQYLLQELGKNQRDPLAVLREVTPAELMQIPGIGPAKATSILAAVELGKRTFQFRPLDKTPIDSPVAAVAALSQDLMWQNQERFAVLLLDVKNRLLGTQVITIGTATETLASPREIFREIIRQGATRTIVAHNHPSGNVEPSPEDIELTRQLLAGAQLLGIPLLDHLILGNGNHQSLREVTTLWNDYPQGD.

The 123-residue stretch at 113 to 235 (PIDSPVAAVA…HQSLREVTTL (123 aa)) folds into the MPN domain. 3 residues coordinate Zn(2+): H184, H186, and D197. The short motif at 184 to 197 (HNHPSGNVEPSPED) is the JAMM motif element.

Belongs to the UPF0758 family.

The sequence is that of UPF0758 protein Ava_0172 from Trichormus variabilis (strain ATCC 29413 / PCC 7937) (Anabaena variabilis).